The sequence spans 372 residues: N-methyl-L-tryptophan oxidase (372 aa).

4–34 (DLIIIGSGSVGAAAGYYATRAGLKVLMTDAH) is an FAD binding site. C307 carries the S-8alpha-FAD cysteine modification.

Belongs to the MSOX/MTOX family. MTOX subfamily. As to quaternary structure, monomer. It depends on FAD as a cofactor.

The enzyme catalyses N(alpha)-methyl-L-tryptophan + O2 + H2O = L-tryptophan + formaldehyde + H2O2. Catalyzes the oxidative demethylation of N-methyl-L-tryptophan. In Salmonella typhimurium (strain LT2 / SGSC1412 / ATCC 700720), this protein is N-methyl-L-tryptophan oxidase.